The following is a 306-amino-acid chain: NAD kinase 1 (306 aa).

Asp67 acts as the Proton acceptor in catalysis. Residues 67–68 (DG), 149–150 (NE), and Asp181 contribute to the NAD(+) site.

The protein belongs to the NAD kinase family. It depends on a divalent metal cation as a cofactor.

Its subcellular location is the cytoplasm. It catalyses the reaction NAD(+) + ATP = ADP + NADP(+) + H(+). In terms of biological role, involved in the regulation of the intracellular balance of NAD and NADP, and is a key enzyme in the biosynthesis of NADP. Catalyzes specifically the phosphorylation on 2'-hydroxyl of the adenosine moiety of NAD to yield NADP. The protein is NAD kinase 1 of Thermosynechococcus vestitus (strain NIES-2133 / IAM M-273 / BP-1).